A 212-amino-acid polypeptide reads, in one-letter code: Ribonuclease HII (212 aa).

Residues 24–212 form the RNase H type-2 domain; sequence QLVAGVDEVG…PVKKALGIEE (189 aa). A divalent metal cation contacts are provided by aspartate 30, glutamate 31, and aspartate 122.

This sequence belongs to the RNase HII family. Requires Mn(2+) as cofactor. Mg(2+) serves as cofactor.

The protein resides in the cytoplasm. The catalysed reaction is Endonucleolytic cleavage to 5'-phosphomonoester.. Its function is as follows. Endonuclease that specifically degrades the RNA of RNA-DNA hybrids. The polypeptide is Ribonuclease HII (Vibrio campbellii (strain ATCC BAA-1116)).